Reading from the N-terminus, the 310-residue chain is HTH-type transcriptional activator TtdR (310 aa).

An HTH lysR-type domain is found at 6 to 63 (PLAKDLQVLVEIVHSGSFSAAAATLGQTPAFVTKRIQILENTLATTLLNRSARGVALT). Residues 23–42 (FSAAAATLGQTPAFVTKRIQ) constitute a DNA-binding region (H-T-H motif).

It belongs to the LysR transcriptional regulatory family.

In terms of biological role, positive regulator required for L-tartrate-dependent anaerobic growth on glycerol. Induces expression of the ttdA-ttdB-ygjE operon. The protein is HTH-type transcriptional activator TtdR (ttdR) of Escherichia coli (strain K12).